The primary structure comprises 449 residues: Tryptophan--tRNA ligase (449 aa).

ATP is bound by residues 10-12 and 18-19; these read TTT and GN. The short motif at 11 to 19 is the 'HIGH' region element; that stretch reads TTGTPHLGN. Position 143 (D143) interacts with L-tryptophan. ATP is bound by residues 155–157, L197, and 204–208; these read GRD and KMSKS. A 'KMSKS' region motif is present at residues 204-208; that stretch reads KMSKS.

The protein belongs to the class-I aminoacyl-tRNA synthetase family. As to quaternary structure, homodimer.

It localises to the cytoplasm. It carries out the reaction tRNA(Trp) + L-tryptophan + ATP = L-tryptophyl-tRNA(Trp) + AMP + diphosphate + H(+). In terms of biological role, catalyzes the attachment of tryptophan to tRNA(Trp). This Pseudomonas syringae pv. tomato (strain ATCC BAA-871 / DC3000) protein is Tryptophan--tRNA ligase.